The sequence spans 221 residues: UPF0502 protein PLES_16071 (221 aa).

Belongs to the UPF0502 family.

In Pseudomonas aeruginosa (strain LESB58), this protein is UPF0502 protein PLES_16071.